The following is a 122-amino-acid chain: Small ribosomal subunit protein uS13 (122 aa).

Positions 95-122 (QLPVRGQRTHTNARTRKGKAKPIAGKKK) are disordered.

This sequence belongs to the universal ribosomal protein uS13 family. Part of the 30S ribosomal subunit. Forms a loose heterodimer with protein S19. Forms two bridges to the 50S subunit in the 70S ribosome.

In terms of biological role, located at the top of the head of the 30S subunit, it contacts several helices of the 16S rRNA. In the 70S ribosome it contacts the 23S rRNA (bridge B1a) and protein L5 of the 50S subunit (bridge B1b), connecting the 2 subunits; these bridges are implicated in subunit movement. Contacts the tRNAs in the A and P-sites. The protein is Small ribosomal subunit protein uS13 of Beijerinckia indica subsp. indica (strain ATCC 9039 / DSM 1715 / NCIMB 8712).